Reading from the N-terminus, the 167-residue chain is Outer envelope pore protein 21A, chloroplastic (167 aa).

At 1–21 (METSLRYATNSRSLKIHAKEK) the chain is on the cytoplasmic side. Residues 22 to 31 (FPVNSKTRLQ) form a beta stranded membrane-spanning segment. At 32-55 (LHGELDTGAGVPSYFCAMIRYFFH) the chain is on the chloroplast intermembrane side. The beta stranded transmembrane segment at 56 to 65 (EASTNLGVGL) threads the bilayer. Residues 66–71 (HYDKRE) lie on the Cytoplasmic side of the membrane. Residues 72–81 (KLRCLVRGKK) form a beta stranded membrane-spanning segment. At 82 to 87 (KFPVIT) the chain is on the chloroplast intermembrane side. The chain crosses the membrane as a beta stranded span at residues 88–97 (DEVVTFNIKG). The Cytoplasmic portion of the chain corresponds to 98–110 (RCDFDQDLVQRNA). A beta stranded transmembrane segment spans residues 111–120 (KGAAEFDWNI). The Chloroplast intermembrane portion of the chain corresponds to 121-127 (WKFQKDQ). Residues 128–137 (DLRLRIGYEM) traverse the membrane as a beta stranded segment. Over 138–142 (FEKVP) the chain is Cytoplasmic. A beta stranded transmembrane segment spans residues 143 to 152 (YMQIRENNWT). The Chloroplast intermembrane portion of the chain corresponds to 153 to 158 (FNTNLK). Residues 159–167 (GKWNVRYDL) form a beta stranded membrane-spanning segment.

Belongs to the plastid outer envelope porin OEP21 (TC 1.B.29) family.

It localises to the plastid. It is found in the etioplast membrane. Its subcellular location is the chloroplast outer membrane. Its function is as follows. Voltage-dependent rectifying anion channel that facilitates the translocation between chloroplast and cytoplasm of phosphorylated carbohydrates such as triosephosphate, 3-phosphoglycerate and inorganic phosphate (Pi) depending of ATP to triosephosphate ratio in the plastidial intermembrane space; in high triosephosphate/ATP conditions (e.g. photosynthesis), export of triosphosphate from chloroplast (outward rectifying channels), but in high ATP/triosephosphate conditions (e.g. dark phase), import of phosphosolutes (inward rectifying channels). In Arabidopsis thaliana (Mouse-ear cress), this protein is Outer envelope pore protein 21A, chloroplastic (OEP21A).